A 309-amino-acid chain; its full sequence is Probable pyridoxal 5'-phosphate synthase subunit PDX1 (309 aa).

Residue D40 coordinates D-ribose 5-phosphate. The active-site Schiff-base intermediate with D-ribose 5-phosphate is K97. A D-ribose 5-phosphate-binding site is contributed by G169. R181 is a binding site for D-glyceraldehyde 3-phosphate. Residues G230 and 251 to 252 (GS) contribute to the D-ribose 5-phosphate site.

Belongs to the PdxS/SNZ family.

The enzyme catalyses aldehydo-D-ribose 5-phosphate + D-glyceraldehyde 3-phosphate + L-glutamine = pyridoxal 5'-phosphate + L-glutamate + phosphate + 3 H2O + H(+). It participates in cofactor biosynthesis; pyridoxal 5'-phosphate biosynthesis. In terms of biological role, catalyzes the formation of pyridoxal 5'-phosphate from ribose 5-phosphate (RBP), glyceraldehyde 3-phosphate (G3P) and ammonia. The ammonia is provided by PDX2. Can also use ribulose 5-phosphate and dihydroxyacetone phosphate as substrates, resulting from enzyme-catalyzed isomerization of RBP and G3P, respectively. Also plays an indirect role in resistance to singlet oxygen-generating photosensitizers. In Ginkgo biloba (Ginkgo), this protein is Probable pyridoxal 5'-phosphate synthase subunit PDX1 (PDX1).